Consider the following 445-residue polypeptide: Adenylosuccinate synthetase (445 aa).

Residues 12–18 (GDEGKGK) and 40–42 (GHT) contribute to the GTP site. Asp13 serves as the catalytic Proton acceptor. 2 residues coordinate Mg(2+): Asp13 and Gly40. Residues 13 to 16 (DEGK), 38 to 41 (NAGH), Thr128, Arg142, Gln223, Thr238, and Arg302 contribute to the IMP site. The active-site Proton donor is the His41. 298 to 304 (TTTGRKR) serves as a coordination point for substrate. GTP is bound by residues Arg304, 330-332 (KLD), and 411-413 (SLG).

The protein belongs to the adenylosuccinate synthetase family. In terms of assembly, homodimer. The cofactor is Mg(2+).

It localises to the cytoplasm. The catalysed reaction is IMP + L-aspartate + GTP = N(6)-(1,2-dicarboxyethyl)-AMP + GDP + phosphate + 2 H(+). It functions in the pathway purine metabolism; AMP biosynthesis via de novo pathway; AMP from IMP: step 1/2. Its function is as follows. Plays an important role in the de novo pathway of purine nucleotide biosynthesis. Catalyzes the first committed step in the biosynthesis of AMP from IMP. The chain is Adenylosuccinate synthetase from Cyanothece sp. (strain PCC 7425 / ATCC 29141).